The chain runs to 1919 residues: Protein TIC 214 (1919 aa).

The next 6 helical transmembrane spans lie at 18–38 (IINSVVVVGLYYGFLTTFSIG), 67–87 (FITGQLMMFISIYYAPLHLAL), 90–110 (PHTITVLALPYLLFHFFWNNH), 127–147 (LSIQCVFLNNLIFQLFNHFIL), 175–195 (VGWLIGHILFMKWVGLVLVWI), and 224–244 (IFSILLFITCVYYLGRIPSPI). 3 disordered regions span residues 250–375 (KETP…GKEK), 1107–1129 (IKSITKEKKKGTPGIKSSPNKRS), and 1606–1636 (ELKNRNQEEKEPADRGDLGSDAQNQGNRRFV). Composition is skewed to acidic residues over residues 259 to 269 (GESEEETDVEI), 278 to 288 (GESEEETDVEI), 297 to 307 (GESEEETDVEI), 316 to 328 (GESEEETDVEIET), and 355 to 366 (EKEDPDKIDETE). The segment covering 1107 to 1117 (IKSITKEKKKG) has biased composition (basic residues). Over residues 1606 to 1623 (ELKNRNQEEKEPADRGDL) the composition is skewed to basic and acidic residues. Polar residues predominate over residues 1626 to 1636 (DAQNQGNRRFV).

It belongs to the TIC214 family. As to quaternary structure, part of the Tic complex.

The protein resides in the plastid. It localises to the chloroplast inner membrane. Its function is as follows. Involved in protein precursor import into chloroplasts. May be part of an intermediate translocation complex acting as a protein-conducting channel at the inner envelope. The polypeptide is Protein TIC 214 (Panax ginseng (Korean ginseng)).